The chain runs to 527 residues: UDP-glucuronosyltransferase 2A1 (527 aa).

A signal peptide spans 1 to 20; that stretch reads MLKNILLWSLQLSLLGMSLG. The Extracellular portion of the chain corresponds to 21-490; that stretch reads GNVLIWPMEG…LSWFQYHSLD (470 aa). Asn-49 is a glycosylation site (N-linked (GlcNAc...) asparagine). Position 134 is an N6-succinyllysine (Lys-134). The N-linked (GlcNAc...) asparagine glycan is linked to Asn-313. The helical transmembrane segment at 491–507 threads the bilayer; the sequence is VIGFLLACMASAILLVI. Residues 508–527 lie on the Cytoplasmic side of the membrane; it reads KCCLFVFQKIGKTXKKNKRD.

The protein belongs to the UDP-glycosyltransferase family. In terms of tissue distribution, olfactory epithelium. Mainly found in the sustentacular cells and to a lesser extent in Bowman's gland cells. Also expressed in the olfactory sensory neuron nuclei. Neuronal localization within the olfactory bulb is mainly found in the deeper granular cells.

Its subcellular location is the membrane. It catalyses the reaction glucuronate acceptor + UDP-alpha-D-glucuronate = acceptor beta-D-glucuronoside + UDP + H(+). The catalysed reaction is 16beta,17beta-estriol + UDP-alpha-D-glucuronate = 16beta,17beta-estriol 16-O-(beta-D-glucuronate) + UDP + H(+). It carries out the reaction 16alpha,17alpha-estriol + UDP-alpha-D-glucuronate = 16alpha,17alpha-estriol 16-O-(beta-D-glucuronate) + UDP + H(+). The enzyme catalyses 17alpha-estradiol + UDP-alpha-D-glucuronate = 17alpha-estradiol 17-O-(beta-D-glucuronate) + UDP + H(+). It catalyses the reaction 17alpha-estradiol + UDP-alpha-D-glucuronate = 17alpha-estradiol 3-O-(beta-D-glucuronate) + UDP + H(+). The catalysed reaction is 17beta-estradiol + UDP-alpha-D-glucuronate = 17beta-estradiol 3-O-(beta-D-glucuronate) + UDP + H(+). It carries out the reaction 17beta-estradiol + UDP-alpha-D-glucuronate = 17beta-estradiol 17-O-(beta-D-glucuronate) + UDP + H(+). The enzyme catalyses testosterone + UDP-alpha-D-glucuronate = testosterone 17-O-(beta-D-glucuronate) + UDP + H(+). It catalyses the reaction epitestosterone + UDP-alpha-D-glucuronate = epitestosterone 17-O-(beta-D-glucuronate) + UDP + H(+). The catalysed reaction is lithocholate + UDP-alpha-D-glucuronate = lithocholoyl-3-O-(beta-D-glucuronate) + UDP + H(+). It carries out the reaction lithocholate + UDP-alpha-D-glucuronate = lithocholoyl-24-O-(beta-D-glucuronate) + UDP. The enzyme catalyses deoxycholate + UDP-alpha-D-glucuronate = deoxycholoyl-24-O-(beta-D-glucuronate) + UDP. It catalyses the reaction hyodeoxycholate + UDP-alpha-D-glucuronate = hyodeoxycholate 6-O-(beta-D-glucuronate) + UDP + H(+). The catalysed reaction is hyocholate + UDP-alpha-D-glucuronate = hyocholoyl-24-O-(beta-D-glucuronate) + UDP. Functionally, UDP-glucuronosyltransferase (UGT) that catalyzes phase II biotransformation reactions in which lipophilic substrates are conjugated with glucuronic acid to increase the metabolite's water solubility, thereby facilitating excretion into either the urine or bile. Essential for the elimination and detoxification of drugs, xenobiotics and endogenous compounds. Catalyzes the glucuronidation of endogenous steroid hormones such as androgens (testosterones) and estrogens (estradiol and estriol). Contributes to bile acid (BA) detoxification by catalyzing the glucuronidation of BA substrates, which are natural detergents for dietary lipids absorption. Shows a high affinity to aliphatic odorants such as citronellol as well as olfactory tissue specificity, and therefore may be involved in olfaction. The chain is UDP-glucuronosyltransferase 2A1 from Rattus norvegicus (Rat).